Reading from the N-terminus, the 448-residue chain is Tapasin (448 aa).

Residues 1-20 (MKSLSLLLAVALGLATAVSA) form the signal peptide. Over 21–414 (GPAVIECWFV…LSGPSLEDSI (394 aa)) the chain is Lumenal. A disulfide bridge connects residues Cys27 and Cys91. A glycan (N-linked (GlcNAc...) asparagine) is linked at Asn253. Positions 292-399 (PKVSLMPATL…PASGRSAEVT (108 aa)) constitute an Ig-like C1-type domain. Cysteines 315 and 382 form a disulfide. A helical transmembrane segment spans residues 415–435 (GLFLSAFFLLGLFKALGWAAV). The Cytoplasmic segment spans residues 436–448 (YLSTCKDSKKKAE).

As to quaternary structure, heterodimer with PDIA3; disulfide-linked. Obligatory mediator for the interaction between newly assembled MHC class I molecules, calreticulin, PDIA3 and TAP. Up to 4 MHC class I/tapasin complexes bind to 1 TAP. Interacts with HLA-G-B2M complex; this interaction is required for loading of high affinity peptides. On its own or as part of MHC class I peptide loading complex, interacts with ligand-free MR1 or MR1-B2M complex, providing for stable MR1 pools ready for metabolite antigen processing.

The protein localises to the endoplasmic reticulum membrane. Its function is as follows. Involved in the association of MHC class I with transporter associated with antigen processing (TAP) and in the assembly of MHC class I with peptide (peptide loading). The chain is Tapasin (TAPBP) from Chlorocebus aethiops (Green monkey).